An 848-amino-acid polypeptide reads, in one-letter code: MQEVSNHTPMIQQYLKIKSQYPDILLFYRMGDFYELFFDDAKNAAELLDITLTARGKSNGDSIPMAGVPYHAAEGYIAKIVKKGLSVAICEQIGDPSTSKGPVERQVTRIITPATVSEEAFLDSNQDSILVSIYEKNNKYHIAYTSYTQGKIHLINTVTNSSDLKNQILKLSPQEIITNSNSLVEKNIFNKPVKVLEEWYFSNFEAKKHILNSFDNSFANNILNLYKKEQLTVIGSILAYLTNTLKSTPKHISDILLDEDQNILNIDINSRNNLELDNNSKSSLLNIMDKCKTSLGSRLLRRYFKNPTRDLNKISLRHNVIKSFKQHHYFLKIQDILSYINDIERIISRVALGTVKPKDLVSLNSSLEQLPKLKSLLEKINTSEIININNHIHQIDELTKLLNKAIVDNPPMTIRDGGVIKHGFDQELDELRGLKDNSYDFLLKFETLQKQKTGINTLKVGYNRVHGYYIELSKQYADKVPTEYIRRQTLKASERYITDELKAFEDKILSAKEKALAREKLIYDTLLNKVLEYYSQIQQTAASIAKIDVLANFAERAIKLNLNQPKFNKTGKLDIKEARHLAIEQNIDEPFIPNDTLLSTDTYTLEIITGPNMGGKSTYMRQVAQLIFLAYIGSFVPASYADIGDIDTIYTRIGASDDISSGRSTFMVEMTETAYILNNATKKSLVIMDEIGRGTSTFDGLSLAKACAEKFAKIGAMTLFATHYFELTELVNQYPNTKNIHFEAKEYKDNIYFMHKAVAGAAKKSYGIQVAKLAGISKDVLDSAKKNLANLEKGQDKLDTIDQPQQNLQLDQTPQKNHIKERLETIDINSITPIEALNILFELKKTLI.

ATP is bound at residue 610 to 617; the sequence is GPNMGGKS.

It belongs to the DNA mismatch repair MutS family.

In terms of biological role, this protein is involved in the repair of mismatches in DNA. It is possible that it carries out the mismatch recognition step. This protein has a weak ATPase activity. The polypeptide is DNA mismatch repair protein MutS (Francisella philomiragia subsp. philomiragia (strain ATCC 25017 / CCUG 19701 / FSC 153 / O#319-036)).